A 293-amino-acid polypeptide reads, in one-letter code: Nitrogenase iron protein (293 aa).

An ATP-binding site is contributed by 10–17 (GKGGIGKS). C98 is a binding site for [4Fe-4S] cluster. An ADP-ribosylarginine; by dinitrogenase reductase ADP-ribosyltransferase modification is found at R101. [4Fe-4S] cluster is bound at residue C133.

The protein belongs to the NifH/BchL/ChlL family. In terms of assembly, homodimer. [4Fe-4S] cluster serves as cofactor. In terms of processing, the reversible ADP-ribosylation of Arg-101 inactivates the nitrogenase reductase and regulates nitrogenase activity.

The catalysed reaction is N2 + 8 reduced [2Fe-2S]-[ferredoxin] + 16 ATP + 16 H2O = H2 + 8 oxidized [2Fe-2S]-[ferredoxin] + 2 NH4(+) + 16 ADP + 16 phosphate + 6 H(+). The key enzymatic reactions in nitrogen fixation are catalyzed by the nitrogenase complex, which has 2 components: the iron protein and the molybdenum-iron protein. The protein is Nitrogenase iron protein of Klebsiella pneumoniae (strain 342).